A 472-amino-acid polypeptide reads, in one-letter code: Glutamine synthetase (472 aa).

In terms of domain architecture, GS beta-grasp spans 13–101 (SKARFVDLRF…TCDVIDPADG (89 aa)). A GS catalytic domain is found at 108–472 (PRSIARRAEA…PLEFEMYYSL (365 aa)). Residues glutamate 133 and glutamate 135 each contribute to the Mg(2+) site. Position 211 (glutamate 211) interacts with ATP. 2 residues coordinate Mg(2+): glutamate 216 and glutamate 224. Residues 268–269 (NG) and glycine 269 contribute to the L-glutamate site. Histidine 273 contacts Mg(2+). Residues 275–277 (HQS) and serine 277 each bind ATP. Positions 325, 331, and 343 each coordinate L-glutamate. ATP-binding residues include arginine 343, arginine 348, and lysine 356. Glutamate 361 contacts Mg(2+). Arginine 363 is an L-glutamate binding site. An O-AMP-tyrosine modification is found at tyrosine 401.

The protein belongs to the glutamine synthetase family. Oligomer of 12 subunits arranged in the form of two hexameric ring. Mg(2+) serves as cofactor.

The protein localises to the cytoplasm. It carries out the reaction L-glutamate + NH4(+) + ATP = L-glutamine + ADP + phosphate + H(+). Its activity is regulated as follows. The activity of this enzyme could be controlled by adenylation under conditions of abundant glutamine. Catalyzes the ATP-dependent biosynthesis of glutamine from glutamate and ammonia. The sequence is that of Glutamine synthetase from Neisseria gonorrhoeae.